The chain runs to 595 residues: Arginine--tRNA ligase (595 aa).

The 'HIGH' region signature appears at 132–142 (ANPTGPLHVGH).

Belongs to the class-I aminoacyl-tRNA synthetase family. Monomer.

The protein resides in the cytoplasm. It carries out the reaction tRNA(Arg) + L-arginine + ATP = L-arginyl-tRNA(Arg) + AMP + diphosphate. This is Arginine--tRNA ligase from Cupriavidus taiwanensis (strain DSM 17343 / BCRC 17206 / CCUG 44338 / CIP 107171 / LMG 19424 / R1) (Ralstonia taiwanensis (strain LMG 19424)).